Reading from the N-terminus, the 288-residue chain is G1/S-specific cyclin-D2 (288 aa).

The 126-residue stretch at 26–151 (LQNLLTIEER…VLGKLKWNLA (126 aa)) folds into the Cyclin N-terminal domain. The disordered stretch occupies residues 264–288 (QHNGSKSVEDPDQATTPTDVRDVDL). Residue Ser-270 is modified to Phosphoserine. Thr-279 bears the Phosphothreonine mark.

Belongs to the cyclin family. Cyclin D subfamily. In terms of assembly, interacts with either CDK4 or CDK6 protein kinase to form a serine/threonine kinase holoenzyme complex. The cyclin subunit imparts substrate specificity to the complex. Post-translationally, phosphorylation at Thr-279 by MAP kinases is required for ubiquitination and degradation by the DCX(AMBRA1) complex. Ubiquitinated by the DCX(AMBRA1) complex during the transition from G1 to S cell phase, leading to its degradation: ubiquitination is dependent on Thr-279 phosphorylation. The DCX(AMBRA1) complex represents the major regulator of CCND2 stability during the G1/S transition. Polyubiquitinated by the SCF(FBXL2) complex, leading to proteasomal degradation.

Its subcellular location is the nucleus. It is found in the cytoplasm. The protein resides in the nucleus membrane. In terms of biological role, regulatory component of the cyclin D2-CDK4 (DC) complex that phosphorylates and inhibits members of the retinoblastoma (RB) protein family including RB1 and regulates the cell-cycle during G(1)/S transition. Phosphorylation of RB1 allows dissociation of the transcription factor E2F from the RB/E2F complex and the subsequent transcription of E2F target genes which are responsible for the progression through the G(1) phase. Hypophosphorylates RB1 in early G(1) phase. Cyclin D-CDK4 complexes are major integrators of various mitogenenic and antimitogenic signals. The chain is G1/S-specific cyclin-D2 (Ccnd2) from Rattus norvegicus (Rat).